The primary structure comprises 593 residues: Mitoguardin 2 (593 aa).

Helical transmembrane passes span 11 to 31 and 42 to 62; these read MIQALAMTVAEIPVFLYTTFG and PGLRKVLFATALGTVALALAA. Disordered stretches follow at residues 103–141 and 196–231; these read GYSSRRVQSPSSKSNDTLSGISSIEPSKHSGSSHSVASM and SVGQRGDSGSTPMPRDGLRNPETASEPLSEPESQRK. Low complexity-rich tracts occupy residues 106 to 116 and 123 to 141; these read SRRVQSPSSKS and ISSIEPSKHSGSSHSVASM. A Phosphoserine modification is found at Ser132. Thr206 is subject to Phosphothreonine. A phosphoserine mark is found at Ser220, Ser224, and Ser228. Thr273 is modified (phosphothreonine). Phosphoserine occurs at positions 276 and 295. Positions 292-298 match the FFAT motif; that stretch reads SFFSATE.

The protein belongs to the mitoguardin family. In terms of assembly, homodimer and heterodimer; forms heterodimers with MIGA1. Interacts with PLD6/MitoPLD. Interacts (via phosphorylated FFAT motif) with MOSPD2, VAPA and VAPB. In terms of processing, phosphorylation at Ser-295 of the FFAT motif activates interaction with MOSPD2, VAPA and VAPB.

The protein localises to the mitochondrion outer membrane. Its function is as follows. Regulator of mitochondrial fusion: acts by forming homo- and heterodimers at the mitochondrial outer membrane and facilitating the formation of PLD6/MitoPLD dimers. May act by regulating phospholipid metabolism via PLD6/MitoPLD. The polypeptide is Mitoguardin 2 (Homo sapiens (Human)).